We begin with the raw amino-acid sequence, 382 residues long: MNIFDEIGDKESVFKDKKYLDHRFLPDRLPHREEQIRSIAKYWVEALNGVTPPDITIYGKTGTGKTAVAKFAMKQLKEASKDCDVNIRTEYIRCTDYTTEYQVIARLCQQLGRDVPYRGWTKAEIVNTFRNMFKKNAFGQDMILMVVLDEIDILLRNDGDGLLYTLTRTDNVSILSISNYVEFKKFIKPRVRSSLRDREIVFPPYGAQQLVDILEERSKMSFKEGALDDDVIPLCAALAAKEEGDARYALDLLRTAGEIADERDSDKVLGDFVREAKDYIEHNKITDIILTLPSQQQRVLEAILYLTKRKEEITSGRLYEVYKEIAKGDSVSYRRIFDFINELEMLGLISTNTVSRGRGKGRTNIIDLQCETSLLEDSLWGV.

Residues 63 to 67 (TGKTA), Tyr-205, and Arg-217 each bind ATP.

This sequence belongs to the CDC6/cdc18 family. Monomer. Interacts with MCM via the WH domain. In terms of processing, autophosphorylated on a serine. Phosphorylation is stimulated by binding to MCM. Both single-stranded DNA and double-stranded DNA inhibit the phosphorylation reaction.

Functionally, involved in regulation of DNA replication. May play an essential role in origin recognition. Binds to DNA, with a preference for origin-specific double-stranded sequences. Does not bind single-stranded DNA. Inhibits MCM helicase activity but does not affect its oligomeric state. The polypeptide is ORC1-type DNA replication protein 1 (cdc6-1) (Methanothermobacter thermautotrophicus (strain ATCC 29096 / DSM 1053 / JCM 10044 / NBRC 100330 / Delta H) (Methanobacterium thermoautotrophicum)).